The following is a 1256-amino-acid chain: Neuronal cell adhesion molecule (1256 aa).

An N-terminal signal peptide occupies residues 1 to 29; sequence MQLKIMPKKKHLSAGGVPLILFLCQMISA. At 30–1119 the chain is on the extracellular side; the sequence is LDVPLDLVQP…ASRQVDIATQ (1090 aa). 2 consecutive Ig-like C2-type domains span residues 40 to 128 and 135 to 229; these read PTIT…AAVS and PSRS…QPIS. 2 disulfide bridges follow: Cys-62/Cys-117 and Cys-161/Cys-212. N-linked (GlcNAc...) asparagine glycosylation is present at Asn-77. N-linked (GlcNAc...) asparagine glycosylation is found at Asn-217, Asn-239, Asn-245, Asn-270, Asn-308, and Asn-371. Ig-like C2-type domains lie at 261–350, 355–442, 448–535, and 539–626; these read PPTF…ISVT, PYWI…AFVN, PRIL…VHLE, and PTRI…AVLR. Cysteines 286 and 334 form a disulfide. Cys-376 and Cys-426 are joined by a disulfide. N-linked (GlcNAc...) asparagine glycans are attached at residues Asn-427 and Asn-501. 2 cysteine pairs are disulfide-bonded: Cys-470-Cys-519 and Cys-561-Cys-610. 8 N-linked (GlcNAc...) asparagine glycosylation sites follow: Asn-613, Asn-710, Asn-796, Asn-852, Asn-987, Asn-1003, Asn-1013, and Asn-1067. 4 Fibronectin type-III domains span residues 643 to 738, 740 to 837, 842 to 944, and 948 to 1045; these read PPFD…TKAA, PDQN…SGED, APGN…TPEG, and APSS…VDEA. A helical membrane pass occupies residues 1120-1142; it reads GWFIGLMCAVALLILILLIVCFI. The Cytoplasmic segment spans residues 1143–1256; it reads RRNKGGKYPV…SPVNAMNSFV (114 aa). Residues 1151 to 1171 show a composition bias toward basic and acidic residues; it reads PVKEKEDAHADPEIQPMKEDD. Residues 1151–1256 form a disordered region; the sequence is PVKEKEDAHA…SPVNAMNSFV (106 aa). Residue Thr-1173 is modified to Phosphothreonine. Tyr-1177 carries the post-translational modification Phosphotyrosine. Ser-1178 bears the Phosphoserine mark. The span at 1193–1202 shows a compositional bias: basic and acidic residues; that stretch reads PSDRTVKKED. Phosphoserine is present on residues Ser-1203, Ser-1206, Ser-1223, Ser-1242, Ser-1243, and Ser-1247. The span at 1240-1256 shows a compositional bias: polar residues; that stretch reads NESSEAPSPVNAMNSFV.

It belongs to the immunoglobulin superfamily. L1/neurofascin/NgCAM family. In terms of assembly, constituent of a NFASC/NRCAM/ankyrin-G complex. Detected in a complex with CNTN1 and PTPRB. Interacts with GLDN/gliomedin and MYOC. Detected in sciatic nerve. Detected in brain, especially in the cerebellum Purkinje cell layer, inner granule cell layer and molecular layer (at protein level). Detected in neurons and Schwann cells.

The protein resides in the cell membrane. The protein localises to the cell projection. It localises to the axon. It is found in the secreted. Functionally, cell adhesion protein that is required for normal responses to cell-cell contacts in brain and in the peripheral nervous system. Plays a role in neurite outgrowth in response to contactin binding. Plays a role in mediating cell-cell contacts between Schwann cells and axons. Plays a role in the formation and maintenance of the nodes of Ranvier on myelinated axons. Nodes of Ranvier contain clustered sodium channels that are crucial for the saltatory propagation of action potentials along myelinated axons. During development, nodes of Ranvier are formed by the fusion of two heminodes. Required for normal clustering of sodium channels at heminodes; not required for the formation of mature nodes with normal sodium channel clusters. Required, together with GLDN, for maintaining NFASC and sodium channel clusters at mature nodes of Ranvier. The chain is Neuronal cell adhesion molecule (Nrcam) from Mus musculus (Mouse).